A 341-amino-acid polypeptide reads, in one-letter code: L-threonine 3-dehydrogenase (341 aa).

C38 is a binding site for Zn(2+). Residues T40 and H43 each act as charge relay system in the active site. Zn(2+) contacts are provided by H63, E64, C93, C96, C99, and C107. NAD(+)-binding positions include I175, D195, R200, 262 to 264, and 286 to 287; these read LGI and IY.

This sequence belongs to the zinc-containing alcohol dehydrogenase family. As to quaternary structure, homotetramer. Zn(2+) is required as a cofactor.

Its subcellular location is the cytoplasm. The catalysed reaction is L-threonine + NAD(+) = (2S)-2-amino-3-oxobutanoate + NADH + H(+). It participates in amino-acid degradation; L-threonine degradation via oxydo-reductase pathway; glycine from L-threonine: step 1/2. Its function is as follows. Catalyzes the NAD(+)-dependent oxidation of L-threonine to 2-amino-3-ketobutyrate. This chain is L-threonine 3-dehydrogenase, found in Shewanella sp. (strain ANA-3).